Here is a 184-residue protein sequence, read N- to C-terminus: Mitochondrial import inner membrane translocase subunit TIM22 (184 aa).

Residues Met-1–Ala-26 are disordered. Disulfide bonds link Cys-40–Cys-118 and Cys-137–Cys-156. 2 helical membrane-spanning segments follow: residues Val-45–Met-65 and Ala-151–Asn-171.

This sequence belongs to the Tim17/Tim22/Tim23 family. Component of the TIM22 complex, whose core is composed of TIM22 and TIM54, associated with the 70 kDa heterohexamer composed of TIM9 and TIM10 (or TIM8 and TIM13).

It localises to the mitochondrion inner membrane. Its function is as follows. Essential core component of the TIM22 complex, a complex that mediates the import and insertion of multi-pass transmembrane proteins into the mitochondrial inner membrane. In the TIM22 complex, it constitutes the voltage-activated and signal-gated channel. Forms a twin-pore translocase that uses the membrane potential as external driving force in 2 voltage-dependent steps. The sequence is that of Mitochondrial import inner membrane translocase subunit TIM22 from Candida albicans (strain SC5314 / ATCC MYA-2876) (Yeast).